The sequence spans 126 residues: C-type natriuretic peptide (126 aa).

Positions 1 to 23 are cleaved as a signal peptide; that stretch reads MHLSQLLACALLLTLLSLRPSEA. The interval 19-72 is disordered; sequence RPSEAKPGAPPKVPRTPPGEEVAEPQAAGGGQKKGDKTPGGGGANLKGDRSRLL. The propeptide occupies 24-73; sequence KPGAPPKVPRTPPGEEVAEPQAAGGGQKKGDKTPGGGGANLKGDRSRLLR. The segment covering 26-35 has biased composition (pro residues); the sequence is GAPPKVPRTP. Residues 46 to 63 are compositionally biased toward gly residues; sequence AGGGQKKGDKTPGGGGAN. Residues Cys110 and Cys126 are joined by a disulfide bond.

This sequence belongs to the natriuretic peptide family. Degraded by IDE (in vitro).

The protein resides in the secreted. Its function is as follows. Hormone which plays a role in endochondral ossification through regulation of cartilaginous growth plate chondrocytes proliferation and differentiation. May also be vasoactive and natriuretic. Acts by specifically binding and stimulating NPR2 to produce cGMP. Binds the clearance receptor NPR3. In Sus scrofa (Pig), this protein is C-type natriuretic peptide (NPPC).